The sequence spans 319 residues: MKAKYVFPSDYMADPAANVFDGKLYIYPSHDYDSGECFDDDGGHFQMKDYHVLCIDGDPMEQDAKDCGKQFGIEDIPWVEKQLWDNDCVEKDGKYYLIYSAKDYTGVFHLGVAVADKPEGPFVPEADPIRGSYSIDPCVFKDDDGEIYVYFGGIWGGQLQWYKDNKMLKAEHLPEGKEDPLPSRVARMTGDVKQFAEAPRAVIIVDETGKPLPADDPHRFFEASWMHKYNGKYYFSYSTGDTHLLCYAVGDNPYGPFTYQGVILEPVVGWTTHHSIVEYKGKWYLFHHDCVPSNDTTWLRSLKVAELEYDAEGHIKTVK.

Residue Asp14 is the Proton acceptor of the active site. Glu222 serves as the catalytic Proton donor.

The protein belongs to the glycosyl hydrolase 43 family.

The enzyme catalyses Hydrolysis of (1-&gt;4)-beta-D-xylans, to remove successive D-xylose residues from the non-reducing termini.. Functionally, exoxylanase capable of acting on certain xylans and xylooligosaccharides. In Xylanibacter ruminicola (Prevotella ruminicola), this protein is Beta-xylosidase (xynB).